Reading from the N-terminus, the 154-residue chain is MIGLLQRVREARVEVAGEIVGRIGPGLLALVCAEQGDSEAQADKLLAKMLKLRIFSDEAGKMNRSVQDLDGQGTCGGLLIVSQFTLAADTRGGNRPSFTQAAPPAQGERLYDYFVAQARAVHPMVATGRFAADMQVHLVNDGPVTLPLRIAPPG.

The short motif at 142–143 is the Gly-cisPro motif, important for rejection of L-amino acids element; the sequence is GP.

The protein belongs to the DTD family. In terms of assembly, homodimer.

The protein localises to the cytoplasm. It carries out the reaction glycyl-tRNA(Ala) + H2O = tRNA(Ala) + glycine + H(+). The catalysed reaction is a D-aminoacyl-tRNA + H2O = a tRNA + a D-alpha-amino acid + H(+). In terms of biological role, an aminoacyl-tRNA editing enzyme that deacylates mischarged D-aminoacyl-tRNAs. Also deacylates mischarged glycyl-tRNA(Ala), protecting cells against glycine mischarging by AlaRS. Acts via tRNA-based rather than protein-based catalysis; rejects L-amino acids rather than detecting D-amino acids in the active site. By recycling D-aminoacyl-tRNA to D-amino acids and free tRNA molecules, this enzyme counteracts the toxicity associated with the formation of D-aminoacyl-tRNA entities in vivo and helps enforce protein L-homochirality. The sequence is that of D-aminoacyl-tRNA deacylase from Acidovorax sp. (strain JS42).